Reading from the N-terminus, the 638-residue chain is MGKIIGIDLGTTNSCLAIIEGGKGRVIENSEGDRTTPSIVAYTKDGEVLVGAAAKRQAVTNPKNTFYAVKRLIGRKFGDAEVQKDLDLVPYKITQHDNGDAWVATADGKKLAPQEISAKVLEKMKKTAEDFLGEKVTEAVITVPAYFNDSQRQATKDAGRIAGLDVKRIINEPTAAALAYGLDKKGGDRKIAVYDLGGGTFDVSIIEIAEVDGEKQFEVLATNGDTFLGGEDFDKRVIDYLVDEFNKDQGIDLRKDPLALQRLKDAAERAKIELSSSQQTEVNLPYITADASGPKHLNIKLTRAKLEALVDDLVRKSIEPCRIALNDAGLRTSDVQEVILVGGQTRMPKVQQAVADFFGKEPRKDVNPDEAVALGAAIQGGVLAGDVKDVLLLDVTPLSLGIETMGGVFTKIIEKNTTIPTKASQVFSTAEDGQSAVTVHVLQGEREQARFNKSLAKFDLAGIEPAPRGQPQIEVSFDIDANGILHVSAKDKKTNKEQKVEVKAGSGLSDSEIQQMVADAEAHREEDKKFQELVQARNHADGLIHSTRSAIKEHGSKVGGELIGRVEASLAELEAAVKGDDKNQIEAKSKTLEEVAQSLHMAATAEQQSGSTGAGAGASAKVDDVVDAEFTEVKADKK.

Position 200 is a phosphothreonine; by autocatalysis (threonine 200). Residues 598–621 form a disordered region; it reads SLHMAATAEQQSGSTGAGAGASAK.

This sequence belongs to the heat shock protein 70 family.

Acts as a chaperone. In Xylella fastidiosa (strain M23), this protein is Chaperone protein DnaK.